We begin with the raw amino-acid sequence, 354 residues long: Green-sensitive opsin-3 (354 aa).

The Extracellular segment spans residues 1–39; it reads MSGLNGFEGDNFYIPMSNRTGLVRDPFVYEQYYLAEPWQ. N-linked (GlcNAc...) asparagine glycosylation occurs at N18. Residues 40–64 form a helical membrane-spanning segment; that stretch reads FKLLACYMFFLICLGLPINGFTLFV. Over 65-76 the chain is Cytoplasmic; the sequence is TAQHKKLQQPLN. The chain crosses the membrane as a helical span at residues 77-102; that stretch reads FILVNLAVAGMIMVCFGFTITISSAV. The Extracellular portion of the chain corresponds to 103-116; it reads NGYFYFGPTACAIE. A disulfide bond links C113 and C190. Residues 117 to 136 traverse the membrane as a helical segment; the sequence is GFMATLGGEVALWSLVVLAI. Residues 137–155 lie on the Cytoplasmic side of the membrane; that stretch reads ERYIVVCKPMGSFKFSASH. A helical membrane pass occupies residues 156–179; that stretch reads ALGGIGFTWFMAMTCAAPPLVGWS. Residues 180–205 are Extracellular-facing; the sequence is RYIPEGLQCSCGPDYYTLNPKYNNES. N203 is a glycosylation site (N-linked (GlcNAc...) asparagine). The helical transmembrane segment at 206-233 threads the bilayer; it reads YVIYMFVVHFIVPVTVIFFTYGRLVCTV. Over 234 to 255 the chain is Cytoplasmic; sequence KSAAAAQQDSASTQKAEKEVTR. Residues 256-279 traverse the membrane as a helical segment; the sequence is MVILMVVGFLVAWTPYATVAAWIF. The Extracellular portion of the chain corresponds to 280 to 287; it reads FNKGAAFT. Residues 288-312 form a helical membrane-spanning segment; it reads AQFMAVPAFFSKSSALFNPIIYVLL. The residue at position 299 (K299) is an N6-(retinylidene)lysine. At 313–354 the chain is on the cytoplasmic side; that stretch reads NKQFRNCMLTTLFCGKNPLGDEESSTVSTKTEVSTVSSVSPA.

It belongs to the G-protein coupled receptor 1 family. Opsin subfamily. In terms of tissue distribution, the color pigments are found in the cone photoreceptor cells.

The protein localises to the membrane. In terms of biological role, visual pigments are the light-absorbing molecules that mediate vision. They consist of an apoprotein, opsin, covalently linked to cis-retinal. The sequence is that of Green-sensitive opsin-3 (RH11) from Psalidodon fasciatus (Banded astyanax).